A 220-amino-acid chain; its full sequence is Uracil-DNA glycosylase 1 (220 aa).

The active-site Proton acceptor is the Asp65.

Belongs to the uracil-DNA glycosylase (UDG) superfamily. UNG family.

Its subcellular location is the cytoplasm. The catalysed reaction is Hydrolyzes single-stranded DNA or mismatched double-stranded DNA and polynucleotides, releasing free uracil.. Its function is as follows. Excises uracil residues from the DNA which can arise as a result of misincorporation of dUMP residues by DNA polymerase or due to deamination of cytosine. The protein is Uracil-DNA glycosylase 1 of Bacteroides fragilis (strain ATCC 25285 / DSM 2151 / CCUG 4856 / JCM 11019 / LMG 10263 / NCTC 9343 / Onslow / VPI 2553 / EN-2).